We begin with the raw amino-acid sequence, 477 residues long: Proton-coupled amino acid transporter 3 (477 aa).

Positions 1-13 are enriched in basic and acidic residues; sequence MGKTPLLREDGRC. The interval 1–42 is disordered; it reads MGKTPLLREDGRCQRNTFGGSKASSKGSSSSSSNNTVSSKKK. The Cytoplasmic segment spans residues 1 to 54; that stretch reads MGKTPLLREDGRCQRNTFGGSKASSKGSSSSSSNNTVSSKKKPRRKADALMFIQ. Low complexity predominate over residues 19 to 38; the sequence is GGSKASSKGSSSSSSNNTVS. Residues 55–75 form a helical membrane-spanning segment; sequence IFIHLLKSNIGTGFLGLPLAV. The Extracellular segment spans residues 76–77; that stretch reads KN. The chain crosses the membrane as a helical span at residues 78–98; it reads AGLLVGPVSLLAIGALTVHCM. At 99–144 the chain is on the cytoplasmic side; that stretch reads DILLNCACHLTSRLQRSFVNYEETTMYSLETCPSPWLRTHSVWGRY. A helical membrane pass occupies residues 145 to 165; it reads VVSFLLIVTQLGFCSVYFMFM. Over 166-202 the chain is Extracellular; the sequence is ADNLQQIVEEAHFTSNVCQPRQSLVMTSILDTRFYML. A helical transmembrane segment spans residues 203–223; the sequence is TILPFLILLVLVQNPQVLSIF. Topologically, residues 224–225 are cytoplasmic; sequence ST. Residues 226 to 246 form a helical membrane-spanning segment; it reads LATITTLSSLALIFEYLIQIP. Residues 247–259 lie on the Extracellular side of the membrane; sequence HHSHLPLVASWKT. Residues 260–280 form a helical membrane-spanning segment; the sequence is FLLFFGTAIFTFEGVGMVLPL. At 281 to 291 the chain is on the cytoplasmic side; it reads KSQMKSPQQFP. Residues 292–312 form a helical membrane-spanning segment; it reads AVLYLGMSFVIFLYICLGTLG. Residues 313–344 are Extracellular-facing; it reads YMKFGADTQASITLNLPNCWLYQSVKLMYSVG. A helical transmembrane segment spans residues 345–365; it reads IFFTYALQFHVPAEIIVPYVV. At 366–374 the chain is on the cytoplasmic side; that stretch reads SRASENWAL. The helical transmembrane segment at 375-395 threads the bilayer; that stretch reads FIDLTVRAALVCLTCFSAVLI. Topologically, residues 396 to 399 are extracellular; that stretch reads PRLD. Residues 400–420 form a helical membrane-spanning segment; sequence LVISLVGSVSSSALALIIPPL. Over 421–439 the chain is Cytoplasmic; that stretch reads LEIATFYSENISCTTIAKD. A helical transmembrane segment spans residues 440-460; the sequence is IMISILGLLGCVLGTYQALYE. Residues 461-477 are Extracellular-facing; it reads MTQQSRFPMLNSTNVHT.

Belongs to the amino acid/polyamine transporter 2 family.

It is found in the membrane. This Rattus norvegicus (Rat) protein is Proton-coupled amino acid transporter 3 (Slc36a3).